The chain runs to 368 residues: MSKKGRVLVAMSGGIDSSVAAVMLHEQGYEVIGMTMKTWDYANLGGSKKETGCCSLDSINDARNIAVSLGFPHYIVDIREEFGDYVINHFNKEYLDGRTPNPCVLCNTHIKWDSLLRRADKMDCDFIATGHYAQVRSENNRFVISKGLDENKDQSYALWGISQQSLSRTMFPLGHLHKTDIRAMAAERGFMDLVNKSESYEICFVPDNDYRGFLKRRNPGLEEEVRGGEFVMEDGTVVGKHEGYPFYTIGQRKGLGITLGYPVFVTEIQKENNRVVLGREEGLNRNGMWVDQLIMSKYENLKGIQKQSITKVRYNDDGTSSTIEQVGDEMRVLFHEHVKAIAPGQAAVFYEGNDVIGGGWIKSSFKQD.

ATP is bound by residues 10–17 and methionine 36; that span reads AMSGGIDS. The active-site Nucleophile is cysteine 106. A disulfide bridge connects residues cysteine 106 and cysteine 203. Glycine 130 serves as a coordination point for ATP. An interaction with tRNA region spans residues 152-154; that stretch reads KDQ. Cysteine 203 (cysteine persulfide intermediate) is an active-site residue. An interaction with tRNA region spans residues 313–314; that stretch reads RY.

The protein belongs to the MnmA/TRMU family.

The protein resides in the cytoplasm. The catalysed reaction is S-sulfanyl-L-cysteinyl-[protein] + uridine(34) in tRNA + AH2 + ATP = 2-thiouridine(34) in tRNA + L-cysteinyl-[protein] + A + AMP + diphosphate + H(+). Its function is as follows. Catalyzes the 2-thiolation of uridine at the wobble position (U34) of tRNA, leading to the formation of s(2)U34. The chain is tRNA-specific 2-thiouridylase MnmA from Cytophaga hutchinsonii (strain ATCC 33406 / DSM 1761 / CIP 103989 / NBRC 15051 / NCIMB 9469 / D465).